The following is a 458-amino-acid chain: Elongation factor 1-alpha (458 aa).

Gly2 is subject to N,N,N-trimethylglycine. Lys3 is subject to N6,N6-dimethyllysine; alternate. Lys3 is modified (N6-methyllysine; alternate). A tr-type G domain is found at 5–240; it reads KTHVNVVVIG…DAIEPPQRPT (236 aa). Positions 14 to 21 are G1; that stretch reads GHVDSGKS. GTP is bound at residue 14–21; sequence GHVDSGKS. N6-methyllysine is present on Lys30. Residues 70–74 form a G2 region; it reads GITID. Lys79 carries the N6,N6,N6-trimethyllysine modification. The tract at residues 91–94 is G3; sequence DAPG. GTP contacts are provided by residues 91–95 and 153–156; these read DAPGH and NKMD. Residues 153-156 are G4; sequence NKMD. Positions 192–194 are G5; that stretch reads SGW. Lys316 carries the N6,N6-dimethyllysine; alternate modification. Lys316 carries the N6-methyllysine; alternate modification. Lys390 bears the N6-methyllysine mark.

It belongs to the TRAFAC class translation factor GTPase superfamily. Classic translation factor GTPase family. EF-Tu/EF-1A subfamily.

The protein resides in the cytoplasm. It functions in the pathway protein biosynthesis; polypeptide chain elongation. Functionally, this protein promotes the GTP-dependent binding of aminoacyl-tRNA to the A-site of ribosomes during protein biosynthesis. This is Elongation factor 1-alpha (TEF1) from Meyerozyma guilliermondii (strain ATCC 6260 / CBS 566 / DSM 6381 / JCM 1539 / NBRC 10279 / NRRL Y-324) (Yeast).